The sequence spans 430 residues: Pre-B-cell leukemia transcription factor 2 (430 aa).

A disordered region spans residues 1-52 (MDERLLGPPPPGGGRGGLGLVSGEPGGPGEPPGGGDPGGGSGGVPGGRGKQD). The segment covering 13 to 48 (GGRGGLGLVSGEPGGPGEPPGGGDPGGGSGGVPGGR) has biased composition (gly residues). One can recognise a PBC domain in the interval 48–243 (RGKQDIGDIL…VMILRSRFLD (196 aa)). Residues 55–134 (DILQQIMTIT…EGVAGPEKGG (80 aa)) are PBC-A. A phosphoserine mark is found at serine 136, serine 151, and serine 159. Positions 137–243 (AAAAAAAAAS…VMILRSRFLD (107 aa)) are PBC-B. A DNA-binding region (homeobox; TALE-type) is located at residues 244-306 (ARRKRRNFSK…NKRIRYKKNI (63 aa)). 2 disordered regions span residues 326-347 (QGGHSRTSSPTPPSSAGSGGSF) and 378-430 (SMGP…DTSN). A Phosphoserine modification is found at serine 330. Residues 380-392 (GPGGYGDNLGGGQ) show a composition bias toward gly residues. Phosphoserine is present on serine 395. The span at 403–418 (GSWQEAVTPSSVTSPT) shows a compositional bias: polar residues.

It belongs to the TALE/PBX homeobox family. In terms of assembly, forms heterodimers with MEIS1 and heterotrimers with MEIS1 and HOXA9. Interacts with PBXIP1. Ubiquitously expressed.

It localises to the nucleus. In terms of biological role, transcriptional activator that binds the sequence 5'-ATCAATCAA-3'. Activates transcription of PF4 in complex with MEIS1. The polypeptide is Pre-B-cell leukemia transcription factor 2 (PBX2) (Homo sapiens (Human)).